The chain runs to 482 residues: Glutamyl-tRNA(Gln) amidotransferase subunit A (482 aa).

Active-site charge relay system residues include K74 and S149. Residue S173 is the Acyl-ester intermediate of the active site.

The protein belongs to the amidase family. GatA subfamily. As to quaternary structure, heterotrimer of A, B and C subunits.

It carries out the reaction L-glutamyl-tRNA(Gln) + L-glutamine + ATP + H2O = L-glutaminyl-tRNA(Gln) + L-glutamate + ADP + phosphate + H(+). Allows the formation of correctly charged Gln-tRNA(Gln) through the transamidation of misacylated Glu-tRNA(Gln) in organisms which lack glutaminyl-tRNA synthetase. The reaction takes place in the presence of glutamine and ATP through an activated gamma-phospho-Glu-tRNA(Gln). The protein is Glutamyl-tRNA(Gln) amidotransferase subunit A of Prochlorococcus marinus (strain AS9601).